We begin with the raw amino-acid sequence, 293 residues long: Actin-related protein 2/3 complex subunit 2 (293 aa).

It belongs to the ARPC2 family. Component of the Arp2/3 complex composed of arpB/Arp2, arpC/Arp3, arcA/p41-arc, arcB/p34-arc, arcC/p21-arc, arcD/p20-arc and arcE/p16-arc. Interacts with carmil (via the region between the LRR domain and COOH-terminal proline-rich domain); carmil is required for Arp2/3-dependent actin nucleation. Arp2/3 complex, MyoB, MyoC, and the alpha and beta subunits of capping protein all form a larger complex with carmil.

It localises to the cytoplasm. The protein resides in the cytoskeleton. The protein localises to the cell projection. Its subcellular location is the cytosol. It is found in the cell cortex. It localises to the pseudopodium. Its function is as follows. Functions as a component of the Arp2/3 complex which is involved in regulation of actin polymerization and together with an activating nucleation-promoting factor (NPF) mediates the formation of branched actin networks. Seems to contact the pointed end of the daughter actin filament. The Arp2/3 complex is involved in organizing the actin system in cell motility and chemotaxis, in phagocytosis and macropinocytosis, at late steps of endosome processing, and in mitosis. In concert with a group of other proteins, the Arp2/3 complex plays a general role in the rapid activation and adaptation of the actin system to its multiple functions. This chain is Actin-related protein 2/3 complex subunit 2 (arcB), found in Dictyostelium discoideum (Social amoeba).